The following is a 373-amino-acid chain: Peroxisomal biogenesis factor 3 (373 aa).

Topologically, residues 1–15 (MFRSTWNFLKRHKKK) are cytoplasmic. Residues 1-45 (MFRSTWNFLKRHKKKCIFLGTVLGGVYILGKYGQKKIREIQEREA) form a targeting to peroxisomes region. A helical transmembrane segment spans residues 16 to 36 (CIFLGTVLGGVYILGKYGQKK). Over 37–116 (IREIQEREAA…LKIISFTRSI (80 aa)) the chain is Peroxisomal. Residues 117-140 (VAVYSTCMLVVLLRVQLNIIGGYI) traverse the membrane as a helical segment. An interaction with PEX19 region spans residues 120–136 (YSTCMLVVLLRVQLNII). Topologically, residues 141–373 (YLDNAAVGKN…AFSTPQQLEK (233 aa)) are cytoplasmic.

It belongs to the peroxin-3 family. As to quaternary structure, interacts with PEX19.

Its subcellular location is the peroxisome membrane. Functionally, involved in peroxisome biosynthesis and integrity. Assembles membrane vesicles before the matrix proteins are translocated. As a docking factor for PEX19, is necessary for the import of peroxisomal membrane proteins in the peroxisomes. This chain is Peroxisomal biogenesis factor 3 (PEX3), found in Bos taurus (Bovine).